Reading from the N-terminus, the 384-residue chain is Cytochrome b (384 aa).

4 helical membrane passes run 32 to 52 (FGSL…FLSM), 75 to 96 (FLLR…YFHI), 111 to 131 (WRVG…GYVL), and 176 to 196 (FFSL…VHLI). The heme b site is built by His-81 and His-95. Positions 180 and 194 each coordinate heme b. His-199 serves as a coordination point for a ubiquinone. 4 helical membrane passes run 224 to 244 (SKDW…VYLM), 286 to 306 (FGGV…PLLH), 318 to 338 (FGRM…WIGS), and 345 to 366 (FIII…LIPL).

This sequence belongs to the cytochrome b family. The main subunits of complex b-c1 are: cytochrome b, cytochrome c1 and the Rieske protein. Heme b is required as a cofactor.

It is found in the mitochondrion inner membrane. Its function is as follows. Component of the ubiquinol-cytochrome c reductase complex (complex III or cytochrome b-c1 complex) that is part of the mitochondrial respiratory chain. The b-c1 complex mediates electron transfer from ubiquinol to cytochrome c. Contributes to the generation of a proton gradient across the mitochondrial membrane that is then used for ATP synthesis. The sequence is that of Cytochrome b (MT-CYB) from Acropora tenuis (Purple tipped acropora).